The chain runs to 275 residues: Diaminopimelate epimerase (275 aa).

Substrate-binding residues include asparagine 13, glutamine 46, and asparagine 65. The active-site Proton donor is cysteine 74. Substrate-binding positions include 75-76, asparagine 158, asparagine 191, and 209-210; these read GN and ER. Cysteine 218 serves as the catalytic Proton acceptor. Residue 219–220 coordinates substrate; sequence GT.

This sequence belongs to the diaminopimelate epimerase family. In terms of assembly, homodimer.

The protein localises to the cytoplasm. It carries out the reaction (2S,6S)-2,6-diaminopimelate = meso-2,6-diaminopimelate. Its pathway is amino-acid biosynthesis; L-lysine biosynthesis via DAP pathway; DL-2,6-diaminopimelate from LL-2,6-diaminopimelate: step 1/1. Catalyzes the stereoinversion of LL-2,6-diaminopimelate (L,L-DAP) to meso-diaminopimelate (meso-DAP), a precursor of L-lysine and an essential component of the bacterial peptidoglycan. In Nitrosomonas europaea (strain ATCC 19718 / CIP 103999 / KCTC 2705 / NBRC 14298), this protein is Diaminopimelate epimerase.